The primary structure comprises 258 residues: Gamma-secretase subunit Aph-1b (258 aa).

7 helical membrane passes run 3 to 23, 32 to 52, 70 to 90, 118 to 138, 161 to 181, 187 to 207, and 214 to 234; these read VAVF…LFMF, VIFL…SSLV, GLLI…RYGY, AYVS…VNIL, AFMT…FFEA, WWAL…TFVN, and LIPT…CAGG.

This sequence belongs to the APH-1 family. As to quaternary structure, component of the gamma-secretase complex, a complex composed of a presenilin homodimer (PSEN1 or PSEN2), nicastrin (NCSTN), APH1 and PEN2.

It localises to the membrane. Essential subunit of the gamma-secretase complex, an endoprotease complex that catalyzes the intramembrane cleavage of integral proteins such as Notch receptors. It may represent a stabilizing cofactor for the presenilin homodimer that promotes the formation of a stable complex. The polypeptide is Gamma-secretase subunit Aph-1b (aph1b) (Danio rerio (Zebrafish)).